Reading from the N-terminus, the 422-residue chain is COUP transcription factor 1 (422 aa).

The interval 1-80 (MAMVVSSWRD…QGPPGSGQSQ (80 aa)) is disordered. The segment covering 39–66 (EQQQAGSGAPHTPQTPGQPGAPATPGTQ) has biased composition (low complexity). The nuclear receptor DNA-binding region spans 82 to 157 (HIECVVCGDK…VGMRREAVQR (76 aa)). NR C4-type zinc fingers lie at residues 85-105 (CVVCGDKSSGKHYGQFTCEGC) and 121-145 (CRANRNCPIDQHHRNQCQYCRLKKC). The NR LBD domain occupies 183–409 (YLSGYISLLL…TLIRDMLLSG (227 aa)). The interval 343-422 (LQEKSQCALE…NWPYMSIQCS (80 aa)) is important for dimerization.

It belongs to the nuclear hormone receptor family. NR2 subfamily. As to quaternary structure, binds DNA as dimer; homodimer and probable heterodimer with NR2F6. Interacts with GTF2B; this interaction is direct. Interacts with COPS2.

The protein resides in the nucleus. Functionally, coup (chicken ovalbumin upstream promoter) transcription factor binds to the ovalbumin promoter and, in conjunction with another protein (S300-II) stimulates initiation of transcription. Binds to both direct repeats and palindromes of the 5'-AGGTCA-3' motif. Represses transcriptional activity of LHCG. This is COUP transcription factor 1 (Nr2f1) from Mus musculus (Mouse).